Reading from the N-terminus, the 345-residue chain is Transcriptional activator hacA (345 aa).

Residues Met-1–Leu-106 form a disordered region. Over residues Pro-30–Val-40 the composition is skewed to polar residues. Composition is skewed to basic and acidic residues over residues Lys-41–Lys-51 and Lys-77–Leu-91. The 64-residue stretch at Glu-83–Leu-146 folds into the bZIP domain. The tract at residues Arg-85–Arg-138 is basic motif. The tract at residues Leu-139 to Leu-146 is leucine-zipper. Residues Arg-186 to Ser-210 form a disordered region. A compositionally biased stretch (polar residues) spans Pro-192–Ser-210.

This sequence belongs to the bZIP family. As to quaternary structure, homodimer.

It is found in the nucleus. Its function is as follows. Transcriptional activator involved in the unfolded protein response (UPR) pathway. Recognizes and binds to the UPR element (UPRE) in the promoter of UPR-regulated genes. Increases the synthesis of endoplasmic reticulum-resident proteins required for protein folding as well as components of the secretory pathway. In Aspergillus oryzae (strain ATCC 42149 / RIB 40) (Yellow koji mold), this protein is Transcriptional activator hacA (hacA).